The chain runs to 196 residues: Somatotropin (196 aa).

A signal peptide spans 1 to 18 (MEKVVLLLSVLSLGVVCP). Q19 is modified (pyrrolidone carboxylic acid). Residue H35 participates in Zn(2+) binding. A disulfide bridge links C69 with C169. E178 lines the Zn(2+) pocket. Cysteines 186 and 194 form a disulfide.

The protein belongs to the somatotropin/prolactin family.

The protein resides in the secreted. In terms of biological role, growth hormone plays an important role in growth control and is involved in the regulation of several anabolic processes. Implicated as an osmoregulatory substance important for seawater adaptation. This Siganus guttatus (Orange-spotted spinefoot) protein is Somatotropin (gh).